The chain runs to 393 residues: Dual specificity mitogen-activated protein kinase kinase 1 (393 aa).

The segment at 1–27 (MPKKKPTPIQLNPAPDGSAVNGTSSAE) is disordered. One can recognise a Protein kinase domain in the interval 68-361 (FEKISELGAG…LKQLMVHAFI (294 aa)). Residues 74 to 82 (LGAGNGGVV), K97, 143 to 146 (MEHM), and 150 to 153 (SLDQ) contribute to the ATP site. Residue K97 coordinates U0126. A K-252a-binding site is contributed by 144–146 (EHM). D190 functions as the Proton acceptor in the catalytic mechanism. ATP is bound by residues 192–195 (KPSN) and D208. A K-252a-binding site is contributed by S194. 208-211 (DFGV) provides a ligand contact to U0126. Phosphoserine; by BRAF and RAF1 occurs at positions 218 and 222. Positions 270-307 (ELELMFGCQVEGDAAETPPRPRTPGRPLSSYGMDSRPP) are RAF1-binding. T286 is modified (phosphothreonine). T292 is subject to Phosphothreonine; by MAPK1. A Phosphoserine; by PAK modification is found at S298.

Belongs to the protein kinase superfamily. STE Ser/Thr protein kinase family. MAP kinase kinase subfamily. In terms of assembly, found in a complex with at least BRAF, HRAS, MAP2K1, MAPK3/ERK1 and RGS14. Forms a heterodimer with MAP2K2/MEK2. Forms heterodimers with KSR2 which further dimerize to form tetramers. Interacts with KSR1 or KSR2 and BRAF; the interaction with KSR1 or KSR2 mediates KSR1-BRAF or KSR2-BRAF dimerization. Interacts with ARBB2, LAMTOR3 and RAF1. Interacts with MAPK1/ERK2. Interacts with MORG1. Interacts with PPARG. Interacts with isoform 1 of VRK2. Interacts with SGK1. Interacts with BIRC6/bruce. Interacts with KAT7; the interaction promotes KAT7 phosphorylation. Interacts with RAF1 and NEK10; the interaction is required for ERK1/2-signaling pathway activation in response to UV irradiation. Interacts with TRAF3IP3. Interacts with MOS. (Microbial infection) Interacts with Yersinia YopJ. In terms of processing, phosphorylation at Ser-218 and Ser-222 by MAP kinase kinase kinases (BRAF or MEKK1) positively regulates kinase activity. Also phosphorylated at Thr-292 by MAPK1/ERK2 and at Ser-298 by PAK. MAPK1/ERK2 phosphorylation of Thr-292 occurs in response to cellular adhesion and leads to inhibition of Ser-298 phosphorylation by PAK. Autophosphorylated at Ser-218 and Ser-222, autophosphosphorylation is promoted by NEK10 following UV irradiation. (Microbial infection) Acetylation by Yersinia YopJ prevents phosphorylation and activation, thus blocking the MAPK signaling pathway. In terms of tissue distribution, widely expressed, with extremely low levels in brain.

The protein resides in the cytoplasm. It is found in the cytoskeleton. It localises to the microtubule organizing center. The protein localises to the centrosome. Its subcellular location is the spindle pole body. The protein resides in the nucleus. It is found in the membrane. The enzyme catalyses L-seryl-[protein] + ATP = O-phospho-L-seryl-[protein] + ADP + H(+). It carries out the reaction L-threonyl-[protein] + ATP = O-phospho-L-threonyl-[protein] + ADP + H(+). It catalyses the reaction L-tyrosyl-[protein] + ATP = O-phospho-L-tyrosyl-[protein] + ADP + H(+). With respect to regulation, ras proteins such as HRAS mediate the activation of RAF proteins such as RAF1 or BRAF which in turn activate extracellular signal-regulated kinases (ERK) through MAPK (mitogen-activated protein kinases) and ERK kinases MAP2K1/MEK1 and MAP2K2/MEK2. Activation occurs through phosphorylation of Ser-218 and Ser-222. MAP2K1/MEK1 binds KSR1 or KSR2 releasing the inhibitory intramolecular interaction between KSR1 or KSR2 protein kinase and N-terminal domains. This allows KSR1 or KSR2 dimerization with BRAF leading to BRAF activation and phosphorylation of MAP2K1. MAP2K1/MEK1 is also the target of negative feed-back regulation by its substrate kinases, such as MAPK1/ERK2. These phosphorylate MAP2K1/MEK1 on Thr-292, thereby facilitating dephosphorylation of the activating residues Ser-218 and Ser-222. Inhibited by serine/threonine phosphatase 2A. Many inhibitors have been identified including pyrrole derivatives, TAK-733 (one of a series of 8-methylpyrido[2,3-d]pyrimidine-4,7(3H,8H)-dione derivatives), CH4987655 and RDEA119/BAY 869766. Functionally, dual specificity protein kinase which acts as an essential component of the MAP kinase signal transduction pathway. Binding of extracellular ligands such as growth factors, cytokines and hormones to their cell-surface receptors activates RAS and this initiates RAF1 activation. RAF1 then further activates the dual-specificity protein kinases MAP2K1/MEK1 and MAP2K2/MEK2. Both MAP2K1/MEK1 and MAP2K2/MEK2 function specifically in the MAPK/ERK cascade, and catalyze the concomitant phosphorylation of a threonine and a tyrosine residue in a Thr-Glu-Tyr sequence located in the extracellular signal-regulated kinases MAPK3/ERK1 and MAPK1/ERK2, leading to their activation and further transduction of the signal within the MAPK/ERK cascade. Activates BRAF in a KSR1 or KSR2-dependent manner; by binding to KSR1 or KSR2 releases the inhibitory intramolecular interaction between KSR1 or KSR2 protein kinase and N-terminal domains which promotes KSR1 or KSR2-BRAF dimerization and BRAF activation. Depending on the cellular context, this pathway mediates diverse biological functions such as cell growth, adhesion, survival and differentiation, predominantly through the regulation of transcription, metabolism and cytoskeletal rearrangements. One target of the MAPK/ERK cascade is peroxisome proliferator-activated receptor gamma (PPARG), a nuclear receptor that promotes differentiation and apoptosis. MAP2K1/MEK1 has been shown to export PPARG from the nucleus. The MAPK/ERK cascade is also involved in the regulation of endosomal dynamics, including lysosome processing and endosome cycling through the perinuclear recycling compartment (PNRC), as well as in the fragmentation of the Golgi apparatus during mitosis. The protein is Dual specificity mitogen-activated protein kinase kinase 1 of Homo sapiens (Human).